We begin with the raw amino-acid sequence, 446 residues long: Na(+)-translocating NADH-quinone reductase subunit A (446 aa).

It belongs to the NqrA family. In terms of assembly, composed of six subunits; NqrA, NqrB, NqrC, NqrD, NqrE and NqrF.

It catalyses the reaction a ubiquinone + n Na(+)(in) + NADH + H(+) = a ubiquinol + n Na(+)(out) + NAD(+). Its function is as follows. NQR complex catalyzes the reduction of ubiquinone-1 to ubiquinol by two successive reactions, coupled with the transport of Na(+) ions from the cytoplasm to the periplasm. NqrA to NqrE are probably involved in the second step, the conversion of ubisemiquinone to ubiquinol. The protein is Na(+)-translocating NADH-quinone reductase subunit A of Psychromonas ingrahamii (strain DSM 17664 / CCUG 51855 / 37).